The chain runs to 291 residues: MSSDPDKMMSKADKMTKLTLTRWSADWRGATELYEQAANGFRASNKYEKAKVALEKASKGQEMQASPWDAAKHMESAAALAQKLSIWNEVADFYRKASELYVECGRAQPASDALGKAARALEDVKPDDAIQLYTDACEILEEDGRDQMAFDLYRACANVYIKLEKFTDAATFFLRLGVAADKCDATNSQCKAYLSAIILYLYAHDLQQAEKCYNDCSQIDAFLKSDQSRSASRLLTAYNEGDIEEIKKVASASTVSNLDHMIIKLARKLPTGDVTAIQMNTNDDLDEDDLT.

It belongs to the SNAP family.

The protein resides in the membrane. Its function is as follows. Required for vesicular transport between the endoplasmic reticulum and the Golgi apparatus. Binds to SNARE complex and then recruits NSF to disassemble it. This is Gamma-soluble NSF attachment protein (GSNAP) from Arabidopsis thaliana (Mouse-ear cress).